A 222-amino-acid chain; its full sequence is UPF0128 protein TK2294 (222 aa).

This sequence belongs to the UPF0128 family.

The sequence is that of UPF0128 protein TK2294 from Thermococcus kodakarensis (strain ATCC BAA-918 / JCM 12380 / KOD1) (Pyrococcus kodakaraensis (strain KOD1)).